Here is a 3931-residue protein sequence, read N- to C-terminus: Replicase polyprotein 1ab (3931 aa).

Residues C8–C28 form a C4-type; atypical zinc finger. The PCP1-alpha stretch occupies residues E69 to D182. Catalysis depends on for nsp1-alpha papain-like cysteine proteinase activity residues C76 and H146. Positions V199–S200 are important for host EIF2AK2 inhibition. Residues C270 and H339 each act as for nsp1-beta papain-like cysteine proteinase activity in the active site. The tract at residues L426–P513 is OTU-like. Positions R428–V536 constitute a Peptidase C33 domain. Catalysis depends on for nsp2 cysteine proteinase activity residues C437 and H506. Disordered stretches follow at residues R809–P868 and T1118–V1164. Residues W810–V819 are compositionally biased toward pro residues. The span at P1139–D1151 shows a compositional bias: basic and acidic residues. The next 3 membrane-spanning stretches (helical) occupy residues S1221 to C1241, G1266 to V1286, and W1339 to L1359. Residues F1236–L1359 form an HD1 region. The WCCH stretch occupies residues T1414–Q1438. A run of 5 helical transmembrane segments spans residues I1554–T1574, L1607–L1627, E1629–C1649, A1659–L1679, and F1695–W1715. Positions I1554–W1715 are HD2. Catalysis depends on charge relay system; for serine protease nsp4 activity residues H1818, D1843, and S1897. The next 4 helical transmembrane spans lie at W2006–V2026, F2030–I2050, L2064–G2084, and S2107–F2127. Residues W2006–F2127 form an HD3 region.

This sequence belongs to the arteriviridae polyprotein family. Nsp1-alpha papain-like: Interacts with host RNF31. As to quaternary structure, interacts with host EIF2AK2; this interaction occurs in host stress granules and leads to EIF2AK2 inhibition. Interacts with host G3BP1; this interaction probably plays a role in Nsp1-beta-mediated inhibition of host EIF2AK2. In terms of assembly, interacts with host DDX18; this interaction redistributes host DDX18 to the cytoplasm. Interacts with host IFITM1. As to quaternary structure, interacts with host DDX5. In terms of assembly, interacts with host OTULIN. Interacts with host LGALS3. Specific enzymatic cleavages in vivo by its own proteases yield mature proteins. Nsp1 is autocleaved into two subunits, Nsp1-alpha and Nsp1-beta. There are two alternative pathways for processing. Either nsp4-5 is cleaved, which represents the major pathway or the nsp5-6 and nsp6-7 are processed, which represents the minor pathway. The major pathway occurs when nsp2 acts as a cofactor for nsp4.

Its subcellular location is the host nucleus. The protein resides in the host cytoplasm. The protein localises to the host membrane. It localises to the host endoplasmic reticulum. It is found in the host perinuclear region. The enzyme catalyses RNA(n) + a ribonucleoside 5'-triphosphate = RNA(n+1) + diphosphate. It carries out the reaction ATP + H2O = ADP + phosphate + H(+). It catalyses the reaction Thiol-dependent hydrolysis of ester, thioester, amide, peptide and isopeptide bonds formed by the C-terminal Gly of ubiquitin (a 76-residue protein attached to proteins as an intracellular targeting signal).. The catalysed reaction is uridylyl-uridylyl-ribonucleotide-RNA = a 3'-end uridylyl-2',3'-cyclophospho-uridine-RNA + a 5'-end dephospho-ribonucleoside-RNA. Contains the activities necessary for the transcription of negative stranded RNA, leader RNA, subgenomic mRNAs and progeny virion RNA as well as proteinases responsible for the cleavage of the polyprotein into functional products. Functionally, inhibits host IFN-beta production. Plays a role in the degradation of the host transcriptional activator CREBBP protein. The degradation of host CREBBP which is a key component of the IFN enhanceosome is likely responsible for the inhibition of interferon mediated by Nsp1-alpha. Also participates in the inhibition of host NF-kappa-B activation by counteracting LUBAC-dependent induction of NF-kappa-B. Reduces host NEMO ubiquitination by blocking the interaction between the two LUBAC complex components RNF31 and SHARPIN. In terms of biological role, plays a role in blocking host mRNA nuclear export to the cytoplasm and subversion of host protein synthesis. Additionally, inhibits the interferon-activated JAK/STAT signal transduction by mediating the ubiquitination and subsequent proteasomal degradation of host KPNA1. Repurposes the host antiviral stress granules into a proviral platform to counteract the EIF2AK2/PKR restriction, thereby regulating the host inflammatory response. Its function is as follows. Multifunctional protein that acts as a viral protease and as a viral antagonist of host immune response. Cleaves the nsp2/nsp3 site in the viral polyprotein. Displays deubiquitinating activity that cleaves both ubiquitinated and ISGylated products and therefore inhibits ubiquitin and ISG15-dependent host innate immunity. Also deubiquinates host NFKBIA, thereby interfering with NFKBIA degradation and impairing subsequent NF-kappa-B activation. Plays a role in the inhibition of the immune response by interacting with host IFITM1. This interaction leads to the proteasomal degradation of the IFN-induced antiviral protein IFITM1. Functionally, cleaves the majority of cleavage sites present in the C-terminus of the polyprotein. Triggers host apoptosis through caspase-3, -8, and -9 activations. Subverts host innate immune responses through its protease activity. Targets the NF-kappa-B essential modulator NEMO and mediates its cleavage. Blocks host interferon beta induction and downstream signaling by cleaving mitochondrial MAVS, dislodging it from the mitochondria. Impairs host defense by cleaving host mRNA-decapping enzyme DCP1A to attenuate its antiviral activity. In terms of biological role, plays a role in the initial induction of autophagosomes from host endoplasmic reticulum. Its function is as follows. Plays a role in the inhibition of host STAT3 signaling pathway by inducing the degradation of STAT3. Responsible for replication and transcription of the viral RNA genome. Functionally, displays RNA and DNA duplex-unwinding activities with 5' to 3' polarity. In terms of biological role, plays a role in viral transcription/replication and prevents the simultaneous activation of host cell dsRNA sensors, such as MDA5/IFIH1, OAS, PKR and NLRP3 inflammasome. Acts by degrading the 5'-polyuridines generated during replication of the poly(A) region of viral genomic and subgenomic RNAs. Catalyzes a two-step reaction in which a 2'3'-cyclic phosphate (2'3'-cP) is first generated by 2'-O transesterification, which is then hydrolyzed to a 3'-phosphate (3'-P). If not degraded, poly(U) RNA would hybridize with poly(A) RNA tails and activate host dsRNA sensors. Also plays a role in the inhibition of host type I interferon production by recruiting host OTULIN to promote removal of linear ubiquitination targeting host NEMO. This is Replicase polyprotein 1ab from Porcine reproductive and respiratory syndrome virus (PRRSV).